Here is a 217-residue protein sequence, read N- to C-terminus: MNQTLLSSFGTPFERVENALAALREGRGVMVLDDEDRENEGDMIFPAETMTVEQMALTIRHGSGIVCLCITDDRRKQLDLPMMVENNTSAYGTGFTVTIEAAEGVTTGVSAADRITTVRAAIADGAKPSDLNRPGHVFPLRAQAGGVLTRGGHTEATIDLMTLAGFKPAGVLCELTNDDGTMARAPECIEFANKHNMALVTIEDLVAYRQAHERKAS.

Residues 37–38, Asp-42, 150–154, and Glu-174 each bind D-ribulose 5-phosphate; these read RE and RGGHT. A Mg(2+)-binding site is contributed by Glu-38. Position 153 (His-153) interacts with Mg(2+).

The protein belongs to the DHBP synthase family. As to quaternary structure, homodimer. The cofactor is Mg(2+). Mn(2+) is required as a cofactor.

The enzyme catalyses D-ribulose 5-phosphate = (2S)-2-hydroxy-3-oxobutyl phosphate + formate + H(+). The protein operates within cofactor biosynthesis; riboflavin biosynthesis; 2-hydroxy-3-oxobutyl phosphate from D-ribulose 5-phosphate: step 1/1. Functionally, catalyzes the conversion of D-ribulose 5-phosphate to formate and 3,4-dihydroxy-2-butanone 4-phosphate. The sequence is that of 3,4-dihydroxy-2-butanone 4-phosphate synthase from Escherichia coli O127:H6 (strain E2348/69 / EPEC).